We begin with the raw amino-acid sequence, 115 residues long: Small nuclear ribonucleoprotein Sm D2 (115 aa).

The Sm domain maps to Leu-30–Ala-115.

Belongs to the snRNP core protein family. In terms of assembly, belongs to the 40S cdc5-associated complex (or cwf complex), a spliceosome sub-complex reminiscent of a late-stage spliceosome composed of the U2, U5 and U6 snRNAs and at least brr2, cdc5, cwf2/prp3, cwf3/syf1, cwf4/syf3, cwf5/ecm2, spp42/cwf6, cwf7/spf27, cwf8, cwf9, cwf10, cwf11, cwf12, prp45/cwf13, cwf14, cwf15, cwf16, cwf17, cwf18, cwf19, cwf20, cwf21, cwf22, cwf23, cwf24, cwf25, cwf26, cyp7/cwf27, cwf28, cwf29/ist3, lea1, msl1, prp5/cwf1, prp10, prp12/sap130, prp17, prp22, sap61, sap62, sap114, sap145, slu7, smb1, smd1, smd3, smf1, smg1 and syf2.

The protein localises to the nucleus. Its subcellular location is the cytoplasm. The protein resides in the cytosol. Its function is as follows. Plays a role in pre-mRNA splicing as a core component of the spliceosomal U1, U2, U4 and U5 small nuclear ribonucleoproteins (snRNPs), the building blocks of the spliceosome. This Schizosaccharomyces pombe (strain 972 / ATCC 24843) (Fission yeast) protein is Small nuclear ribonucleoprotein Sm D2 (smd2).